Reading from the N-terminus, the 1473-residue chain is Collagen alpha-1(XVII) chain (1473 aa).

Basic and acidic residues predominate over residues 1-19 (MDITQKNKRDGTEVTERII). Disordered stretches follow at residues 1 to 155 (MDIT…PSTR) and 168 to 188 (GSRSASVSPTRNSSNTLPIPK). The Cytoplasmic segment spans residues 1–474 (MDITQKNKRD…CGSWCSWWKW (474 aa)). The tract at residues 1–572 (MDITQKNKRD…MTEQENGNLR (572 aa)) is nonhelical region (NC16). Polar residues-rich tracts occupy residues 57–96 (LTHGSSGYINSSGSLRGNASTSSYRRAHSPASTLPNSPGS), 111–120 (EGSSSGNSSP), and 170–184 (RSASVSPTRNSSNTL). The necessary for interaction with DST and for the recruitment of DST to hemidesmosome stretch occupies residues 146 to 231 (RLQSASPSTR…WSSTLPAGSS (86 aa)). Residues 475–495 (LLGLLLTWLLLLGLLFGLIAL) form a helical; Signal-anchor for type II membrane protein membrane-spanning segment. Over 496–1473 (AEEVRKLKAR…RRRRSIAVKP (978 aa)) the chain is Extracellular. Disordered stretches follow at residues 567–1017 (ENGN…LSSS), 1173–1234 (FRGI…ISGA), and 1261–1308 (SFIV…SSMG). The triple-helical region stretch occupies residues 573 to 1459 (GSPGPKGDMG…KGEKGDKGDQ (887 aa)). Composition is skewed to low complexity over residues 619-638 (EPGMEGPMGQRGREGPMGPR), 667-678 (PGSVGPKGSIGP), 729-742 (EPGAKGAMGPAGPD), and 769-790 (PGKPGLTGPQGPQGIPGTPGRP). Pro residues predominate over residues 814–835 (PGPPGPPGAMGPPGPPGAPGPV). 2 stretches are compositionally biased toward low complexity: residues 837-847 (PAGLPGQQGPR) and 854-866 (GESFMGSSSSFSE). 2 stretches are compositionally biased toward pro residues: residues 878-899 (PPGPPGPPGPPGEGLPGPPGPP) and 913-922 (PPGPPGPPGP). The span at 940–957 (FPGLSGSGSSSLGLNLQG) shows a compositional bias: low complexity. 2 stretches are compositionally biased toward pro residues: residues 1001–1011 (PPGPPGPPGPP) and 1179–1188 (PPGPPGPPGL). Residues 1198–1210 (TEDLSSYLQTAGL) are compositionally biased toward polar residues. Composition is skewed to pro residues over residues 1214-1228 (PGPPGPPGPPGPRGP) and 1266-1275 (PPGPPGPQGP). Over residues 1283-1307 (STDSSYSRSGSSSSFSRDTSYSSSM) the composition is skewed to low complexity. The N-linked (GlcNAc...) asparagine glycan is linked to Asn-1404. A disordered region spans residues 1417 to 1473 (GAIPGPPGQKGEMGIPGPKGERGPAGPPGPRGHKGEKGDKGDQFYIGRRRRSIAVKP). The span at 1449–1458 (HKGEKGDKGD) shows a compositional bias: basic and acidic residues. A nonhelical region (NC1) region spans residues 1460 to 1473 (FYIGRRRRSIAVKP). Residues 1463–1473 (GRRRRSIAVKP) show a composition bias toward basic residues.

Homotrimers of alpha 1(XVII)chains. Interacts (via cytoplasmic region) with ITGB4 (via cytoplasmic region). Interacts (via cytoplasmic region) with DST (via N-terminus). Interacts (via N-terminus) with PLEC. Interacts (via cytoplasmic region) with DSP. In terms of processing, the intracellular/endo domain is disulfide-linked. Prolines at the third position of the tripeptide repeating unit (G-X-Y) are hydroxylated in some or all of the chains. Post-translationally, the ectodomain is shedded from the surface of keratinocytes resulting in a 120-kDa soluble form, also named as 120 kDa linear IgA disease antigen homolog. The shedding is mediated by membrane-bound metalloproteases.

It localises to the cell junction. The protein resides in the hemidesmosome. It is found in the membrane. The protein localises to the secreted. Its subcellular location is the extracellular space. It localises to the extracellular matrix. The protein resides in the basement membrane. In terms of biological role, may play a role in the integrity of hemidesmosome and the attachment of basal keratinocytes to the underlying basement membrane. Functionally, the 120 kDa linear IgA disease antigen homolog is an anchoring filament component involved in dermal-epidermal cohesion. The polypeptide is Collagen alpha-1(XVII) chain (COL17A1) (Bos taurus (Bovine)).